Here is a 732-residue protein sequence, read N- to C-terminus: Integrator complex subunit 13 (732 aa).

Residues 564–648 show a composition bias toward basic and acidic residues; the sequence is PPEEEERKKR…DETPHMEKSK (85 aa). Residues 564-650 form a disordered region; that stretch reads PPEEEERKKR…TPHMEKSKGP (87 aa). The Nuclear localization signal (NLS) signature appears at 572-582; the sequence is KRGRKREDRED. A Glycyl lysine isopeptide (Lys-Gly) (interchain with G-Cter in SUMO2) cross-link involves residue lysine 611. Phosphoserine occurs at positions 623, 626, and 678. The cleavage module binding motif (CMBM) stretch occupies residues 649 to 694; that stretch reads GPVSLLSLWSNRINTANSRKHQEFAGRLNSVNNRAELYQHLKEENG.

Belongs to the Integrator subunit 13 family. As to quaternary structure, component of the Integrator complex, composed of core subunits INTS1, INTS2, INTS3, INTS4, INTS5, INTS6, INTS7, INTS8, INTS9/RC74, INTS10, INTS11/CPSF3L, INTS12, INTS13, INTS14 and INTS15. The core complex associates with protein phosphatase 2A subunits PPP2CA and PPP2R1A, to form the Integrator-PP2A (INTAC) complex. INTS13 is part of the tail subcomplex, composed of INTS10, INTS13, INTS14 and INTS15. Interacts with transcription factors ZNF609 and ZNF655. Interacts with PAFAH1B1; this interaction may be required for proper recruitment of dynein complexes to the nuclear envelope at prophase.

It is found in the nucleus. Its subcellular location is the cytoplasm. Component of the integrator complex, a multiprotein complex that terminates RNA polymerase II (Pol II) transcription in the promoter-proximal region of genes. The integrator complex provides a quality checkpoint during transcription elongation by driving premature transcription termination of transcripts that are unfavorably configured for transcriptional elongation: the complex terminates transcription by (1) catalyzing dephosphorylation of the C-terminal domain (CTD) of Pol II subunit POLR2A/RPB1 and SUPT5H/SPT5, (2) degrading the exiting nascent RNA transcript via endonuclease activity and (3) promoting the release of Pol II from bound DNA. The integrator complex is also involved in terminating the synthesis of non-coding Pol II transcripts, such as enhancer RNAs (eRNAs), small nuclear RNAs (snRNAs), telomerase RNAs and long non-coding RNAs (lncRNAs). Within the integrator complex, INTS13 is part of the integrator tail module and acts as a platform for the recruitment of transcription factors at promoters. At prophase, mediates recruitment of cytoplasmic dynein to the nuclear envelope, a step important for proper centrosome-nucleus coupling. At G2/M phase, may be required for proper spindle formation and execution of cytokinesis. The polypeptide is Integrator complex subunit 13 (Mus musculus (Mouse)).